A 430-amino-acid polypeptide reads, in one-letter code: Cyclin-A2 (430 aa).

N-acetylmethionine is present on methionine 1. Disordered regions lie at residues methionine 1 to aspartate 80 and glutamate 106 to alanine 129. Serine 5 carries the phosphoserine modification. Residues glutamate 107–serine 120 show a composition bias toward basic and acidic residues.

The protein belongs to the cyclin family. Cyclin AB subfamily. Interacts with the CDK1 and CDK2 protein kinases to form serine/threonine kinase holoenzyme complexes. Interacts with CDK1 (hyperphosphorylated form in G1 and underphosphorylated forms in S and G2). Interacts with CDK2; the interaction increases from G1 to G2. Interacts (associated with CDK2 but not with CDK1) with SCAPER; regulates the activity of CCNA2/CDK2 by transiently maintaining CCNA2 in the cytoplasm. Forms a ternary complex with CDK2 and CDKN1B; CDKN1B inhibits the kinase activity of CDK2 through conformational rearrangements. Interacts with INCA1. Post-translationally, polyubiquitinated via 'Lys-11'-linked ubiquitin by the anaphase-promoting complex (APC/C), leading to its degradation by the proteasome. Deubiquitinated and stabilized by USP37 enables entry into S phase. Ubiquitinated during the G1 phase by the SCF(FBXO31) complex, leading to its proteasomal degradation.

It localises to the nucleus. It is found in the cytoplasm. In terms of biological role, cyclin which controls both the G1/S and the G2/M transition phases of the cell cycle. Functions through the formation of specific serine/threonine kinase holoenzyme complexes with the cyclin-dependent protein kinases CDK1 and CDK2. The cyclin subunit confers the substrate specificity of these complexes and differentially interacts with and activates CDK1 and CDK2 throughout the cell cycle. The polypeptide is Cyclin-A2 (Bos taurus (Bovine)).